The primary structure comprises 288 residues: uncharacterized protein (288 aa).

Residues 5 to 81 (GNVLNKIGSL…LELSIELATK (77 aa)) enclose the HTH rpiR-type domain. A DNA-binding region (H-T-H motif) is located at residues 41–60 (LSEIAKHLQVGEATLVRFCR). The region spanning 129 to 269 (VVKVLKKARR…YALLVQGEED (141 aa)) is the SIS domain.

This is an uncharacterized protein from Haemophilus influenzae (strain ATCC 51907 / DSM 11121 / KW20 / Rd).